Here is an 848-residue protein sequence, read N- to C-terminus: Nuclear cap-binding protein subunit 1 (848 aa).

The MIF4G domain maps to 8 to 228; it reads LLRIGEKGPE…DLLDRIQSLA (221 aa). The interval 767 to 786 is disordered; that stretch reads EDDKPSAMDVDSENGNPKKS.

It belongs to the NCBP1 family. In terms of assembly, component of the nuclear cap-binding complex (CBC), a heterodimer composed of ABH1/CBP80 and CBP20 that interacts with m7GpppG-capped RNA. Expressed in all tissues analyzed, including roots, stems, leaves and flowers.

It is found in the nucleus. Its subcellular location is the cytoplasm. Functionally, component of the cap-binding complex (CBC), which binds cotranscriptionally to the 5'-cap of pre-mRNAs and is involved in various processes such as pre-mRNA splicing and RNA-mediated gene silencing (RNAi) by microRNAs (miRNAs). The CBC complex is involved in miRNA-mediated RNA interference and is required for primary miRNA processing. In the CBC complex, ABH1/CBP80 does not bind directly capped RNAs (m7GpppG-capped RNA) but is required to stabilize the movement of the N-terminal loop of CBP20 and lock the CBC into a high affinity cap-binding state with the cap structure. Involved in flowering regulation, possibly by regulating pre-mRNA splicing of FLC gene. Acts as a negative regulator of abscisic acid signaling in guard cells. The chain is Nuclear cap-binding protein subunit 1 (ABH1) from Arabidopsis thaliana (Mouse-ear cress).